The following is a 499-amino-acid chain: Trichothecene C-4 hydroxylase (499 aa).

The helical transmembrane segment at 7-29 threads the bilayer; it reads VGVAVQLVLTVLLASIPLRVIWN. Residues Asn-173 and Asn-287 are each glycosylated (N-linked (GlcNAc...) asparagine). Cys-442 lines the heme pocket. N-linked (GlcNAc...) asparagine glycosylation occurs at Asn-473.

The protein belongs to the cytochrome P450 family. Heme serves as cofactor.

It is found in the membrane. It functions in the pathway sesquiterpene biosynthesis; trichothecene biosynthesis. Trichothecene C-4 hydroxylase; part of the gene cluster that mediates the production of the antimicrobial trichothecene harzianum A (HA) that plays a role in Botrytis cinerea antagonistic activity and plant defense priming. The biosynthesis of harzianum A begins with the cyclization of farnesyl diphosphate to trichodiene and is catalyzed by the trichodiene synthase TRI5. Trichodiene undergoes a series of oxygenations catalyzed by the cytochrome P450 monooxygenase TRI4. TRI4 controls the addition of 3 oxygens at C-2, C-11, and the C-12, C-13-epoxide to form the intermediate isotrichodiol. Isotrichodiol then undergoes a non-enzymatic isomerization and cyclization to form 12,13-epoxytrichothec-9-ene (EPT) which is further converted to trichodermol by the cytochrome P450 monooxygenase TRI11 via C-4 hydroxylation. The last step of HA synthesis is esterification of an octatriendioyl moiety to the C-4 oxygen of trichodermol. The octatriendioyl moiety is probably produced by the polyketide synthase TRI17 and the esterification performed by the trichothecene O-acetyltransferase TRI3. The chain is Trichothecene C-4 hydroxylase from Trichoderma arundinaceum.